We begin with the raw amino-acid sequence, 125 residues long: uncharacterized protein (125 aa).

This is an uncharacterized protein from Saccharomyces cerevisiae (strain ATCC 204508 / S288c) (Baker's yeast).